A 333-amino-acid chain; its full sequence is Tetraacyldisaccharide 4'-kinase (333 aa).

Position 55–62 (55–62) interacts with ATP; it reads SVGGNGKT.

This sequence belongs to the LpxK family.

It carries out the reaction a lipid A disaccharide + ATP = a lipid IVA + ADP + H(+). The protein operates within glycolipid biosynthesis; lipid IV(A) biosynthesis; lipid IV(A) from (3R)-3-hydroxytetradecanoyl-[acyl-carrier-protein] and UDP-N-acetyl-alpha-D-glucosamine: step 6/6. Functionally, transfers the gamma-phosphate of ATP to the 4'-position of a tetraacyldisaccharide 1-phosphate intermediate (termed DS-1-P) to form tetraacyldisaccharide 1,4'-bis-phosphate (lipid IVA). This chain is Tetraacyldisaccharide 4'-kinase, found in Aeromonas hydrophila subsp. hydrophila (strain ATCC 7966 / DSM 30187 / BCRC 13018 / CCUG 14551 / JCM 1027 / KCTC 2358 / NCIMB 9240 / NCTC 8049).